A 247-amino-acid polypeptide reads, in one-letter code: tRNA pseudouridine synthase A (247 aa).

Catalysis depends on aspartate 52, which acts as the Nucleophile. A substrate-binding site is contributed by tyrosine 110.

This sequence belongs to the tRNA pseudouridine synthase TruA family. Homodimer.

The enzyme catalyses uridine(38/39/40) in tRNA = pseudouridine(38/39/40) in tRNA. In terms of biological role, formation of pseudouridine at positions 38, 39 and 40 in the anticodon stem and loop of transfer RNAs. This chain is tRNA pseudouridine synthase A, found in Geobacter sp. (strain M21).